Here is a 367-residue protein sequence, read N- to C-terminus: GTPase Obg (367 aa).

The Obg domain maps to 1–158 (MFIDNVELTV…VQIRLELKLI (158 aa)). Residues 159-358 (ADVGLVGFPN…LKYALYDLVK (200 aa)) form the OBG-type G domain. GTP is bound by residues 165–172 (GFPNVGKS), 190–194 (FTTLT), 212–215 (DIPG), 280–283 (TKID), and 339–341 (SAV). 2 residues coordinate Mg(2+): serine 172 and threonine 192.

The protein belongs to the TRAFAC class OBG-HflX-like GTPase superfamily. OBG GTPase family. As to quaternary structure, monomer. It depends on Mg(2+) as a cofactor.

The protein resides in the cytoplasm. Functionally, an essential GTPase which binds GTP, GDP and possibly (p)ppGpp with moderate affinity, with high nucleotide exchange rates and a fairly low GTP hydrolysis rate. Plays a role in control of the cell cycle, stress response, ribosome biogenesis and in those bacteria that undergo differentiation, in morphogenesis control. The chain is GTPase Obg from Nitratiruptor sp. (strain SB155-2).